A 770-amino-acid chain; its full sequence is Endothelin-converting enzyme 1 (770 aa).

Residues 1–68 (MRGVWPPPVS…WAARTQVEKR (68 aa)) are Cytoplasmic-facing. Residue Thr25 is modified to Phosphothreonine. The helical; Signal-anchor for type II membrane protein transmembrane segment at 69 to 89 (LVVLVVLLAAGLVACLAALGI) threads the bilayer. Over 90–770 (QYQTRSPSVC…MNPPHKCEVW (681 aa)) the chain is Extracellular. The Peptidase M13 domain occupies 98 to 770 (VCLSEACVSV…MNPPHKCEVW (673 aa)). 5 cysteine pairs are disulfide-bonded: Cys99/Cys104, Cys122/Cys755, Cys130/Cys715, Cys185/Cys435, and Cys644/Cys767. N-linked (GlcNAc...) asparagine glycans are attached at residues Asn166, Asn187, Asn210, Asn270, Asn316, Asn362, Asn383, and Asn539. Position 607 (His607) interacts with Zn(2+). Glu608 is an active-site residue. His611 serves as a coordination point for Zn(2+). N-linked (GlcNAc...) asparagine glycans are attached at residues Asn632 and Asn651. Glu667 serves as a coordination point for Zn(2+). Asp671 functions as the Proton donor in the catalytic mechanism.

The protein belongs to the peptidase M13 family. In terms of assembly, homodimer; disulfide-linked. Interacts with PPP1R16B. Interacts with TSPAN8; this interaction recruits the endothelin converting enzyme ECE1 to tetraspanin-enriched microdomains and positively modulates its enzymatic activity. Requires Zn(2+) as cofactor. As to expression, all isoforms are expressed in umbilical vein endothelial cells, polynuclear neutrophils, fibroblasts, atrium cardiomyocytes and ventricles. Isoforms A, B and C are also expressed in placenta, lung, heart, adrenal gland and phaeochromocytoma; isoforms A and C in liver, testis and small intestine; isoform B, C and D in endothelial cells and umbilical vein smooth muscle cells; isoforms C and D in saphenous vein cells, and isoform C in kidney.

It localises to the cell membrane. The enzyme catalyses Hydrolysis of the 21-Trp-|-Val-22 bond in big endothelin to form endothelin 1.. Inhibited by phosphoramidon. Activated by K49-P1-20, a twenty-residue synthetic peptide shortened from the snake B.asper myotoxin II. Its function is as follows. Converts big endothelin-1 to endothelin-1. The chain is Endothelin-converting enzyme 1 (ECE1) from Homo sapiens (Human).